Here is a 156-residue protein sequence, read N- to C-terminus: Transcription antitermination protein NusB (156 aa).

The protein belongs to the NusB family.

Its function is as follows. Involved in transcription antitermination. Required for transcription of ribosomal RNA (rRNA) genes. Binds specifically to the boxA antiterminator sequence of the ribosomal RNA (rrn) operons. The sequence is that of Transcription antitermination protein NusB from Mycolicibacterium paratuberculosis (strain ATCC BAA-968 / K-10) (Mycobacterium paratuberculosis).